Reading from the N-terminus, the 120-residue chain is NAD(P)H-quinone oxidoreductase subunit 3, chloroplastic (120 aa).

3 helical membrane passes run 9–29, 64–84, and 88–108; these read IFWA…LISA, MFAL…PWAM, and VLGV…IVGL.

This sequence belongs to the complex I subunit 3 family. In terms of assembly, NDH is composed of at least 16 different subunits, 5 of which are encoded in the nucleus.

It is found in the plastid. Its subcellular location is the chloroplast thylakoid membrane. It carries out the reaction a plastoquinone + NADH + (n+1) H(+)(in) = a plastoquinol + NAD(+) + n H(+)(out). The enzyme catalyses a plastoquinone + NADPH + (n+1) H(+)(in) = a plastoquinol + NADP(+) + n H(+)(out). Functionally, NDH shuttles electrons from NAD(P)H:plastoquinone, via FMN and iron-sulfur (Fe-S) centers, to quinones in the photosynthetic chain and possibly in a chloroplast respiratory chain. The immediate electron acceptor for the enzyme in this species is believed to be plastoquinone. Couples the redox reaction to proton translocation, and thus conserves the redox energy in a proton gradient. This chain is NAD(P)H-quinone oxidoreductase subunit 3, chloroplastic, found in Citrus sinensis (Sweet orange).